The following is a 316-amino-acid chain: UDP-N-acetylenolpyruvoylglucosamine reductase (316 aa).

Positions 27–225 (VGGKAERFYR…KTAINALLKK (199 aa)) constitute an FAD-binding PCMH-type domain. The active site involves Arg190. The active-site Proton donor is Ser239. Glu309 is an active-site residue.

This sequence belongs to the MurB family. Requires FAD as cofactor.

The protein resides in the cytoplasm. It carries out the reaction UDP-N-acetyl-alpha-D-muramate + NADP(+) = UDP-N-acetyl-3-O-(1-carboxyvinyl)-alpha-D-glucosamine + NADPH + H(+). It participates in cell wall biogenesis; peptidoglycan biosynthesis. Cell wall formation. The sequence is that of UDP-N-acetylenolpyruvoylglucosamine reductase from Coxiella burnetii (strain Dugway 5J108-111).